We begin with the raw amino-acid sequence, 100 residues long: Flagellar transcriptional regulator FlhD (100 aa).

The protein belongs to the FlhD family. As to quaternary structure, homodimer; disulfide-linked. Forms a heterohexamer composed of two FlhC and four FlhD subunits. Each FlhC binds a FlhD dimer, forming a heterotrimer, and a hexamer assembles by dimerization of two heterotrimers.

It localises to the cytoplasm. Functions in complex with FlhC as a master transcriptional regulator that regulates transcription of several flagellar and non-flagellar operons by binding to their promoter region. Activates expression of class 2 flagellar genes, including fliA, which is a flagellum-specific sigma factor that turns on the class 3 genes. Also regulates genes whose products function in a variety of physiological pathways. The protein is Flagellar transcriptional regulator FlhD of Ralstonia pickettii (strain 12D).